Consider the following 66-residue polypeptide: Delta-buthitoxin-Hj1a (66 aa).

An LCN-type CS-alpha/beta domain is found at 4 to 66 (RDAYIAQPHN…EPIKVPGKCH (63 aa)). Cystine bridges form between C14/C65, C18/C38, C24/C48, and C28/C50.

Belongs to the long (4 C-C) scorpion toxin superfamily. Sodium channel inhibitor family. Alpha subfamily. Expressed by the venom gland.

It localises to the secreted. This recombinant toxin slows fast inactivation on Nav1.1/SCN1A (EC(50)=17 nM), Nav1.4/SN4A (EC(50)=7.5 nM), Nav1.5/SCN5A (EC(50)=9.2 nM) and Nav1.6/SCN8A (EC(50)=37.3 nM) voltage-gated sodium channels. On Nav1.1/SCN1A channel, it acts as an agonist by inducing a shift in both the voltage dependence of channel inactivation (alpha-toxin activity) and activation (beta-toxin activity). In vivo, shows moderate insecticidal activities. It induces irreversible paralysis in blowflies and lethal effects in D.melanogaster. This chain is Delta-buthitoxin-Hj1a, found in Hottentotta judaicus (Black scorpion).